The sequence spans 483 residues: Docking protein 1 (483 aa).

At Met-1 the chain carries N-acetylmethionine. Residues 4-119 (AVMEGPLFLQ…WVQTLCQNAF (116 aa)) form the PH domain. Residue Ser-48 is modified to Phosphoserine. One can recognise an IRS-type PTB domain in the interval 151-259 (EGSQFWVTVQ…HRQKIQGKAG (109 aa)). A phosphoserine mark is found at Ser-269 and Ser-291. A disordered region spans residues 293-326 (PALYSEPLDSLRIPPGPSQDSLYSDPLDSTPARA). Phosphotyrosine occurs at positions 296, 337, 362, 377, 398, and 409. The segment at 409–483 (YAVPPPRSTK…RTGAKSEGST (75 aa)) is disordered. Residues 411–424 (VPPPRSTKPFPAPK) are compositionally biased toward pro residues. At Ser-416 the chain carries Phosphoserine. Residues 434–460 (GAATGSGSQGHSSDTALYSQVQKSGAS) are compositionally biased toward polar residues. Phosphotyrosine is present on Tyr-451. Ser-462 is modified (phosphoserine).

The protein belongs to the DOK family. Type A subfamily. In terms of assembly, interacts with RasGAP, INPP5D/SHIP1 and ABL1. Interacts directly with phosphorylated ITGB3. Interacts with SRMS (via the SH2 and SH3 domains). Constitutively tyrosine-phosphorylated. Phosphorylated by TEC. Phosphorylated by LYN. Phosphorylated on tyrosine residues by the insulin receptor kinase. Results in the negative regulation of the insulin signaling pathway. Phosphorylated on tyrosine residues by SRMS.

The protein localises to the cytoplasm. Its subcellular location is the nucleus. Its function is as follows. DOK proteins are enzymatically inert adaptor or scaffolding proteins. They provide a docking platform for the assembly of multimolecular signaling complexes. DOK1 appears to be a negative regulator of the insulin signaling pathway. Modulates integrin activation by competing with talin for the same binding site on ITGB3. This chain is Docking protein 1 (DOK1), found in Bos taurus (Bovine).